Reading from the N-terminus, the 100-residue chain is MPRIKSAIKRVKIAERNRLRNKATKAMVRALMKKVTSLSSAYAANPQPETLQEIQAAMSAAFSRIDKAAKTGVLHKNTAARRKARLSRIVQRSLAATSAS.

It belongs to the bacterial ribosomal protein bS20 family.

Binds directly to 16S ribosomal RNA. This chain is Small ribosomal subunit protein bS20, found in Synechococcus sp. (strain JA-3-3Ab) (Cyanobacteria bacterium Yellowstone A-Prime).